A 1430-amino-acid polypeptide reads, in one-letter code: ABC transporter eupT (1430 aa).

The tract at residues 1-26 (MAPAIDSTVNDLQPNTPNPEKALSSQ) is disordered. The ABC transporter 1 domain occupies 112-368 (LALPAMIRQL…FVNLGFECPA (257 aa)). Residue N292 is glycosylated (N-linked (GlcNAc...) asparagine). Transmembrane regions (helical) follow at residues 476–496 (WPAV…SSLF), 511–531 (VVLF…VMTL), 557–577 (VLVD…VFYF), 586–606 (GNFF…SGVF), and 620–640 (MVPA…VVPV). Residue N684 is glycosylated (N-linked (GlcNAc...) asparagine). A helical transmembrane segment spans residues 707–727 (VGIIIAMVIFNYLMYFIASEY). Residues 789–1032 (FHWNNVCYDL…TLIDYFERNG (244 aa)) form the ABC transporter 2 domain. 825 to 832 (GVSGAGKT) provides a ligand contact to ATP. N-linked (GlcNAc...) asparagine glycosylation is present at N1019. Transmembrane regions (helical) follow at residues 1133–1153 (ITLC…APLS), 1213–1233 (LPWS…PIGF), 1249–1269 (LMWL…HMCI), 1278–1298 (GGNI…VLAS), 1305–1325 (FWIF…VLST), and 1400–1420 (FGIL…LYWI).

The protein belongs to the ABC transporter superfamily. ABCG family. PDR (TC 3.A.1.205) subfamily.

It is found in the cell membrane. Its function is as follows. ABC transporter; part of the gene cluster that mediates the biosynthesis of eupenifeldin, a bistropolone meroterpenoid that acts as an antitumor agent. The sequence is that of ABC transporter eupT from Phoma sp.